The chain runs to 462 residues: cAMP-dependent protein kinase regulatory subunit (462 aa).

The dimerization and phosphorylation stretch occupies residues 54–203; it reads TPSPRFPPSP…RLKYAIEGNF (150 aa). The disordered stretch occupies residues 79-157; the sequence is FGANANPFGG…PTTDSYPAQY (79 aa). The segment covering 80-102 has biased composition (low complexity); the sequence is GANANPFGGSSSNPNPFGGSASP. A Phosphoserine modification is found at S164. 3',5'-cyclic AMP contacts are provided by residues 204 to 333, E282, R291, 336 to 453, E401, and R410; these read LFSH…FLEE and ILSS…KTGV.

The protein belongs to the cAMP-dependent kinase regulatory chain family. In terms of assembly, tetramer, composed of 2 regulatory (R) and 2 catalytic (C) subunits. In the presence of cAMP it dissociates into 2 active monomeric C subunits and an R dimer.

The sequence is that of cAMP-dependent protein kinase regulatory subunit (pkar1) from Hypocrea atroviridis (Trichoderma atroviride).